A 795-amino-acid chain; its full sequence is Protein translocase subunit SecA 2 (795 aa).

ATP is bound by residues Gln-84, 102–106, and Asp-496; that span reads GEGKT.

This sequence belongs to the SecA family. In terms of assembly, monomer and homodimer. Part of the essential Sec protein translocation apparatus which comprises SecA, SecYEG and auxiliary proteins SecDF. Other proteins may also be involved.

It is found in the cell membrane. It localises to the cytoplasm. It carries out the reaction ATP + H2O + cellular proteinSide 1 = ADP + phosphate + cellular proteinSide 2.. Its function is as follows. Part of the Sec protein translocase complex. Interacts with the SecYEG preprotein conducting channel. Has a central role in coupling the hydrolysis of ATP to the transfer of proteins into and across the cell membrane, serving as an ATP-driven molecular motor driving the stepwise translocation of polypeptide chains across the membrane. This Streptococcus agalactiae serotype V (strain ATCC BAA-611 / 2603 V/R) protein is Protein translocase subunit SecA 2.